A 135-amino-acid polypeptide reads, in one-letter code: Holo-[acyl-carrier-protein] synthase (135 aa).

Mg(2+) is bound by residues D8 and E58.

The protein belongs to the P-Pant transferase superfamily. AcpS family. Mg(2+) is required as a cofactor.

It localises to the cytoplasm. It catalyses the reaction apo-[ACP] + CoA = holo-[ACP] + adenosine 3',5'-bisphosphate + H(+). In terms of biological role, transfers the 4'-phosphopantetheine moiety from coenzyme A to a Ser of acyl-carrier-protein. This Ligilactobacillus salivarius (strain UCC118) (Lactobacillus salivarius) protein is Holo-[acyl-carrier-protein] synthase.